A 137-amino-acid polypeptide reads, in one-letter code: ATP synthase epsilon chain (137 aa).

This sequence belongs to the ATPase epsilon chain family. In terms of assembly, F-type ATPases have 2 components, CF(1) - the catalytic core - and CF(0) - the membrane proton channel. CF(1) has five subunits: alpha(3), beta(3), gamma(1), delta(1), epsilon(1). CF(0) has three main subunits: a, b and c.

The protein resides in the cell inner membrane. In terms of biological role, produces ATP from ADP in the presence of a proton gradient across the membrane. This Ruegeria sp. (strain TM1040) (Silicibacter sp.) protein is ATP synthase epsilon chain.